Reading from the N-terminus, the 159-residue chain is MNITIVSVGKLKEKYLKQGIDEYKKRLNAYAKVSIIEVADEKAPETMSEAEMKEVKRKEGERILSSIAPDAFVITLEIEGKMLGSEQLAKKLDELATYGKSKVVFVIGGSLGISQDVQRRSDLALSFSKMTFPHQLMRLVLIEQVYRSFRINRGEPYHK.

S-adenosyl-L-methionine is bound by residues Leu-76, Gly-108, and Phe-127–Phe-132.

The protein belongs to the RNA methyltransferase RlmH family. As to quaternary structure, homodimer.

It localises to the cytoplasm. The enzyme catalyses pseudouridine(1915) in 23S rRNA + S-adenosyl-L-methionine = N(3)-methylpseudouridine(1915) in 23S rRNA + S-adenosyl-L-homocysteine + H(+). Its function is as follows. Specifically methylates the pseudouridine at position 1915 (m3Psi1915) in 23S rRNA. This chain is Ribosomal RNA large subunit methyltransferase H, found in Oceanobacillus iheyensis (strain DSM 14371 / CIP 107618 / JCM 11309 / KCTC 3954 / HTE831).